The chain runs to 206 residues: Small ribosomal subunit protein uS4 (206 aa).

The 62-residue stretch at 96–157 (SRLDNVVYRM…KAQKQLRVQA (62 aa)) folds into the S4 RNA-binding domain.

Belongs to the universal ribosomal protein uS4 family. Part of the 30S ribosomal subunit. Contacts protein S5. The interaction surface between S4 and S5 is involved in control of translational fidelity.

In terms of biological role, one of the primary rRNA binding proteins, it binds directly to 16S rRNA where it nucleates assembly of the body of the 30S subunit. With S5 and S12 plays an important role in translational accuracy. The polypeptide is Small ribosomal subunit protein uS4 (Alkalilimnicola ehrlichii (strain ATCC BAA-1101 / DSM 17681 / MLHE-1)).